The sequence spans 216 residues: ATP-dependent Clp protease proteolytic subunit 1 (216 aa).

The active-site Nucleophile is S119. H144 is a catalytic residue.

It belongs to the peptidase S14 family. Fourteen ClpP subunits assemble into 2 heptameric rings which stack back to back to give a disk-like structure with a central cavity, resembling the structure of eukaryotic proteasomes.

Its subcellular location is the cytoplasm. The catalysed reaction is Hydrolysis of proteins to small peptides in the presence of ATP and magnesium. alpha-casein is the usual test substrate. In the absence of ATP, only oligopeptides shorter than five residues are hydrolyzed (such as succinyl-Leu-Tyr-|-NHMec, and Leu-Tyr-Leu-|-Tyr-Trp, in which cleavage of the -Tyr-|-Leu- and -Tyr-|-Trp bonds also occurs).. Its function is as follows. Cleaves peptides in various proteins in a process that requires ATP hydrolysis. Has a chymotrypsin-like activity. Plays a major role in the degradation of misfolded proteins. This is ATP-dependent Clp protease proteolytic subunit 1 from Cutibacterium acnes (strain DSM 16379 / KPA171202) (Propionibacterium acnes).